We begin with the raw amino-acid sequence, 355 residues long: Glycerol-3-phosphate dehydrogenase [NAD(P)+] (355 aa).

The NADPH site is built by Ser14, Trp15, Arg35, and Lys117. Residues Lys117, Gly147, and Ser149 each contribute to the sn-glycerol 3-phosphate site. Residue Ala151 coordinates NADPH. 5 residues coordinate sn-glycerol 3-phosphate: Lys202, Asp255, Ser265, Arg266, and Asn267. Lys202 acts as the Proton acceptor in catalysis. Arg266 lines the NADPH pocket. NADPH contacts are provided by Ile290 and Glu292.

This sequence belongs to the NAD-dependent glycerol-3-phosphate dehydrogenase family.

Its subcellular location is the cytoplasm. It catalyses the reaction sn-glycerol 3-phosphate + NAD(+) = dihydroxyacetone phosphate + NADH + H(+). It carries out the reaction sn-glycerol 3-phosphate + NADP(+) = dihydroxyacetone phosphate + NADPH + H(+). The protein operates within membrane lipid metabolism; glycerophospholipid metabolism. Functionally, catalyzes the reduction of the glycolytic intermediate dihydroxyacetone phosphate (DHAP) to sn-glycerol 3-phosphate (G3P), the key precursor for phospholipid synthesis. The sequence is that of Glycerol-3-phosphate dehydrogenase [NAD(P)+] from Lawsonia intracellularis (strain PHE/MN1-00).